The chain runs to 311 residues: Methionyl-tRNA formyltransferase (311 aa).

110-113 (SLLP) is a binding site for (6S)-5,6,7,8-tetrahydrofolate.

This sequence belongs to the Fmt family.

The catalysed reaction is L-methionyl-tRNA(fMet) + (6R)-10-formyltetrahydrofolate = N-formyl-L-methionyl-tRNA(fMet) + (6S)-5,6,7,8-tetrahydrofolate + H(+). In terms of biological role, attaches a formyl group to the free amino group of methionyl-tRNA(fMet). The formyl group appears to play a dual role in the initiator identity of N-formylmethionyl-tRNA by promoting its recognition by IF2 and preventing the misappropriation of this tRNA by the elongation apparatus. This is Methionyl-tRNA formyltransferase from Streptococcus pyogenes serotype M12 (strain MGAS2096).